Reading from the N-terminus, the 238-residue chain is Major prion protein (238 aa).

Residues 1–15 (MLVLFVATWSDLGLC) form the signal peptide. The interaction with GRB2, ERI3 and SYN1 stretch occupies residues 16-215 (KKRPKPGGWN…ESQAYYQRGS (200 aa)). Residues 18–93 (RPKPGGWNTG…WHKPSKPKTS (76 aa)) are disordered. A run of 4 repeats spans residues 44 to 52 (PQGGGGWGQ), 53 to 60 (PHGGGWGQ), 61 to 68 (PHGGGWGQ), and 69 to 76 (PHGGGWGQ). The 4 X 8 AA tandem repeats of P-H-G-G-G-W-G-Q stretch occupies residues 44–76 (PQGGGGWGQPHGGGWGQPHGGGWGQPHGGGWGQ). Residues 45-80 (QGGGGWGQPHGGGWGQPHGGGWGQPHGGGWGQGGGT) are compositionally biased toward gly residues. 11 residues coordinate Cu(2+): glycine 47, glycine 48, histidine 54, glycine 55, glycine 56, histidine 62, glycine 63, glycine 64, histidine 70, glycine 71, and glycine 72. Residues 83–93 (QWHKPSKPKTS) show a composition bias toward basic residues. An intrachain disulfide couples cysteine 164 to cysteine 199. 2 N-linked (GlcNAc...) asparagine glycosylation sites follow: asparagine 166 and asparagine 182. Serine 215 carries the GPI-anchor amidated serine lipid modification. Residues 216 to 238 (SMVLFSSPPVILLISFLIFLIVG) constitute a propeptide, removed in mature form.

It belongs to the prion family. Monomer and homodimer. Has a tendency to aggregate into amyloid fibrils containing a cross-beta spine, formed by a steric zipper of superposed beta-strands. Soluble oligomers may represent an intermediate stage on the path to fibril formation. Copper binding may promote oligomerization. Interacts with GRB2, APP, ERI3/PRNPIP and SYN1. Mislocalized cytosolically exposed PrP interacts with MGRN1; this interaction alters MGRN1 subcellular location and causes lysosomal enlargement. Interacts with KIAA1191.

It localises to the cell membrane. The protein resides in the golgi apparatus. In terms of biological role, its primary physiological function is unclear. Has cytoprotective activity against internal or environmental stresses. May play a role in neuronal development and synaptic plasticity. May be required for neuronal myelin sheath maintenance. May play a role in iron uptake and iron homeostasis. Soluble oligomers are toxic to cultured neuroblastoma cells and induce apoptosis (in vitro). Association with GPC1 (via its heparan sulfate chains) targets PRNP to lipid rafts. Also provides Cu(2+) or Zn(2+) for the ascorbate-mediated GPC1 deaminase degradation of its heparan sulfate side chains. This chain is Major prion protein (PRNP), found in Macaca sylvanus (Barbary macaque).